Consider the following 174-residue polypeptide: CDP-archaeol synthase (174 aa).

A run of 4 helical transmembrane segments spans residues 51–71, 74–94, 112–132, and 136–156; these read LIGL…AGFI, SLLV…ALLG, MLPI…TFLL, and WLLA…IPVF.

Belongs to the CDP-archaeol synthase family. Mg(2+) is required as a cofactor.

It is found in the cell membrane. It carries out the reaction 2,3-bis-O-(geranylgeranyl)-sn-glycerol 1-phosphate + CTP + H(+) = CDP-2,3-bis-O-(geranylgeranyl)-sn-glycerol + diphosphate. It participates in membrane lipid metabolism; glycerophospholipid metabolism. Functionally, catalyzes the formation of CDP-2,3-bis-(O-geranylgeranyl)-sn-glycerol (CDP-archaeol) from 2,3-bis-(O-geranylgeranyl)-sn-glycerol 1-phosphate (DGGGP) and CTP. This reaction is the third ether-bond-formation step in the biosynthesis of archaeal membrane lipids. The protein is CDP-archaeol synthase of Methanocella arvoryzae (strain DSM 22066 / NBRC 105507 / MRE50).